The sequence spans 117 residues: Ribosome-binding factor A (117 aa).

It belongs to the RbfA family. In terms of assembly, monomer. Binds 30S ribosomal subunits, but not 50S ribosomal subunits or 70S ribosomes.

The protein localises to the cytoplasm. One of several proteins that assist in the late maturation steps of the functional core of the 30S ribosomal subunit. Associates with free 30S ribosomal subunits (but not with 30S subunits that are part of 70S ribosomes or polysomes). Required for efficient processing of 16S rRNA. May interact with the 5'-terminal helix region of 16S rRNA. The protein is Ribosome-binding factor A of Lacticaseibacillus casei (strain BL23) (Lactobacillus casei).